Consider the following 253-residue polypeptide: Type III pantothenate kinase (253 aa).

Residue 6-13 (DVGNTNIV) coordinates ATP. 107–110 (GADR) serves as a coordination point for substrate. Asp109 functions as the Proton acceptor in the catalytic mechanism. Asp129 contacts K(+). Residue Thr132 coordinates ATP. Residue Thr184 participates in substrate binding.

Belongs to the type III pantothenate kinase family. Homodimer. It depends on NH4(+) as a cofactor. The cofactor is K(+).

The protein resides in the cytoplasm. The enzyme catalyses (R)-pantothenate + ATP = (R)-4'-phosphopantothenate + ADP + H(+). The protein operates within cofactor biosynthesis; coenzyme A biosynthesis; CoA from (R)-pantothenate: step 1/5. Functionally, catalyzes the phosphorylation of pantothenate (Pan), the first step in CoA biosynthesis. This is Type III pantothenate kinase from Exiguobacterium sibiricum (strain DSM 17290 / CCUG 55495 / CIP 109462 / JCM 13490 / 255-15).